Reading from the N-terminus, the 457-residue chain is Bifunctional protein GlmU (457 aa).

The pyrophosphorylase stretch occupies residues 1 to 229; that stretch reads MYNCAIILAA…YEEIMGVNSR (229 aa). UDP-N-acetyl-alpha-D-glucosamine-binding positions include 8-11, Lys22, Gln73, and 78-79; these read LAAG and GT. Mg(2+) is bound at residue Asp103. Gly140, Glu155, Asn170, and Asn227 together coordinate UDP-N-acetyl-alpha-D-glucosamine. Asn227 serves as a coordination point for Mg(2+). Positions 230-250 are linker; the sequence is VQLSEAEIVMRKRINHKHMVN. Residues 251 to 457 are N-acetyltransferase; sequence GVTFIDCEST…WLDKKGLLKK (207 aa). Positions 332 and 350 each coordinate UDP-N-acetyl-alpha-D-glucosamine. The active-site Proton acceptor is His362. Residues Tyr365 and Asn376 each coordinate UDP-N-acetyl-alpha-D-glucosamine. Residues 385–386, Ala422, and Arg439 contribute to the acetyl-CoA site; that span reads NY.

In the N-terminal section; belongs to the N-acetylglucosamine-1-phosphate uridyltransferase family. This sequence in the C-terminal section; belongs to the transferase hexapeptide repeat family. In terms of assembly, homotrimer. Mg(2+) is required as a cofactor.

It localises to the cytoplasm. It catalyses the reaction alpha-D-glucosamine 1-phosphate + acetyl-CoA = N-acetyl-alpha-D-glucosamine 1-phosphate + CoA + H(+). The enzyme catalyses N-acetyl-alpha-D-glucosamine 1-phosphate + UTP + H(+) = UDP-N-acetyl-alpha-D-glucosamine + diphosphate. It participates in nucleotide-sugar biosynthesis; UDP-N-acetyl-alpha-D-glucosamine biosynthesis; N-acetyl-alpha-D-glucosamine 1-phosphate from alpha-D-glucosamine 6-phosphate (route II): step 2/2. The protein operates within nucleotide-sugar biosynthesis; UDP-N-acetyl-alpha-D-glucosamine biosynthesis; UDP-N-acetyl-alpha-D-glucosamine from N-acetyl-alpha-D-glucosamine 1-phosphate: step 1/1. It functions in the pathway bacterial outer membrane biogenesis; LPS lipid A biosynthesis. Catalyzes the last two sequential reactions in the de novo biosynthetic pathway for UDP-N-acetylglucosamine (UDP-GlcNAc). The C-terminal domain catalyzes the transfer of acetyl group from acetyl coenzyme A to glucosamine-1-phosphate (GlcN-1-P) to produce N-acetylglucosamine-1-phosphate (GlcNAc-1-P), which is converted into UDP-GlcNAc by the transfer of uridine 5-monophosphate (from uridine 5-triphosphate), a reaction catalyzed by the N-terminal domain. The chain is Bifunctional protein GlmU from Clostridium botulinum (strain ATCC 19397 / Type A).